A 151-amino-acid polypeptide reads, in one-letter code: C-C motif chemokine 25 (151 aa).

The signal sequence occupies residues 1-23 (MRPWLLACLVACFVGAWAPAIHA). 2 cysteine pairs are disulfide-bonded: cysteine 30-cysteine 58 and cysteine 31-cysteine 75. Residues 93–151 (RNKKDSKPHHSGRRFFQGPQSGVRKLSSGTSRPLLLKFSGPTRSSKRKASLLTTAIPGP) form a disordered region.

It belongs to the intercrine beta (chemokine CC) family.

It localises to the secreted. Its function is as follows. Potentially involved in T-cell development. Recombinant protein shows chemotactic activity on thymocytes, macrophages, THP-1 cells, and dendritics cells but is inactive on peripheral blood lymphocytes and neutrophils. Binds to CCR9. Binds to atypical chemokine receptor ACKR4 and mediates the recruitment of beta-arrestin (ARRB1/2) to ACKR4. This is C-C motif chemokine 25 (CCL25) from Sus scrofa (Pig).